A 101-amino-acid polypeptide reads, in one-letter code: HssA/B-like protein 40 (101 aa).

The interval 1-26 (MTLFSSISSMSTSMSGSKSSISSFGS) is disordered.

It belongs to the hssA/B family.

The sequence is that of HssA/B-like protein 40 (hssl40) from Dictyostelium discoideum (Social amoeba).